The following is a 384-amino-acid chain: NADH-quinone oxidoreductase subunit D 2 (384 aa).

This sequence belongs to the complex I 49 kDa subunit family. In terms of assembly, NDH-1 is composed of 14 different subunits. Subunits NuoB, C, D, E, F, and G constitute the peripheral sector of the complex.

It is found in the cell membrane. The catalysed reaction is a quinone + NADH + 5 H(+)(in) = a quinol + NAD(+) + 4 H(+)(out). Its function is as follows. NDH-1 shuttles electrons from NADH, via FMN and iron-sulfur (Fe-S) centers, to quinones in the respiratory chain. The immediate electron acceptor for the enzyme in this species is believed to be a menaquinone. Couples the redox reaction to proton translocation (for every two electrons transferred, four hydrogen ions are translocated across the cytoplasmic membrane), and thus conserves the redox energy in a proton gradient. The protein is NADH-quinone oxidoreductase subunit D 2 of Symbiobacterium thermophilum (strain DSM 24528 / JCM 14929 / IAM 14863 / T).